Consider the following 43-residue polypeptide: Photosystem I reaction center subunit IX (43 aa).

Residues 7–27 (YLSTAPVLATFWFGLLAGLLI) traverse the membrane as a helical segment.

Belongs to the PsaJ family.

It localises to the plastid. The protein localises to the chloroplast thylakoid membrane. In terms of biological role, may help in the organization of the PsaE and PsaF subunits. The protein is Photosystem I reaction center subunit IX of Gnetum parvifolium (Small-leaved jointfir).